Reading from the N-terminus, the 277-residue chain is Large ribosomal subunit protein uL2 (277 aa).

2 disordered regions span residues 1–20 (MAVK…TTAD) and 210–277 (GRSR…RGGK). The span at 210 to 221 (GRSRWLGRKPHQ) shows a compositional bias: basic residues.

Belongs to the universal ribosomal protein uL2 family. In terms of assembly, part of the 50S ribosomal subunit. Forms a bridge to the 30S subunit in the 70S ribosome.

One of the primary rRNA binding proteins. Required for association of the 30S and 50S subunits to form the 70S ribosome, for tRNA binding and peptide bond formation. It has been suggested to have peptidyltransferase activity; this is somewhat controversial. Makes several contacts with the 16S rRNA in the 70S ribosome. The polypeptide is Large ribosomal subunit protein uL2 (Deinococcus deserti (strain DSM 17065 / CIP 109153 / LMG 22923 / VCD115)).